The chain runs to 181 residues: Transcriptional repressor NrdR (181 aa).

A zinc finger spans residues 3 to 34; it reads CPFCRHPDSRVVDSREAEEGSAIRRRRSCLSC. An ATP-cone domain is found at 46 to 136; that stretch reads LQVRKRSGAA…VYLAFESLTD (91 aa). The tract at residues 148–181 is disordered; the sequence is AAGPPTTRDGPARPVPRGAVDVSPVIGTQQVHSR.

It belongs to the NrdR family. The cofactor is Zn(2+).

In terms of biological role, negatively regulates transcription of bacterial ribonucleotide reductase nrd genes and operons by binding to NrdR-boxes. The polypeptide is Transcriptional repressor NrdR (Frankia casuarinae (strain DSM 45818 / CECT 9043 / HFP020203 / CcI3)).